We begin with the raw amino-acid sequence, 264 residues long: tRNA pseudouridine synthase A (264 aa).

Residue aspartate 51 is the Nucleophile of the active site. A substrate-binding site is contributed by tyrosine 109.

Belongs to the tRNA pseudouridine synthase TruA family. Homodimer.

The catalysed reaction is uridine(38/39/40) in tRNA = pseudouridine(38/39/40) in tRNA. Its function is as follows. Formation of pseudouridine at positions 38, 39 and 40 in the anticodon stem and loop of transfer RNAs. The protein is tRNA pseudouridine synthase A of Aromatoleum aromaticum (strain DSM 19018 / LMG 30748 / EbN1) (Azoarcus sp. (strain EbN1)).